The sequence spans 62 residues: UPF0434 protein RHECIAT_CH0004260 (62 aa).

The protein belongs to the UPF0434 family.

This is UPF0434 protein RHECIAT_CH0004260 from Rhizobium etli (strain CIAT 652).